Reading from the N-terminus, the 199-residue chain is Peroxiredoxin-1 (199 aa).

N-acetylserine is present on Ser2. The region spanning Ala6 to Phe165 is the Thioredoxin domain. Lys7 is subject to N6-acetyllysine; alternate. Residue Lys7 forms a Glycyl lysine isopeptide (Lys-Gly) (interchain with G-Cter in SUMO2); alternate linkage. 2 positions are modified to N6-acetyllysine: Lys16 and Lys27. Ser32 bears the Phosphoserine mark. Lys35 bears the N6-acetyllysine; alternate mark. The residue at position 35 (Lys35) is an N6-succinyllysine; alternate. Catalysis depends on Cys52, which acts as the Cysteine sulfenic acid (-SOH) intermediate. Residue Thr90 is modified to Phosphothreonine. Lys120 participates in a covalent cross-link: Glycyl lysine isopeptide (Lys-Gly) (interchain with G-Cter in SUMO2). N6-acetyllysine is present on Lys136. The tract at residues Gly176–Lys199 is disordered. A compositionally biased stretch (basic and acidic residues) spans Ile184 to Lys199. Lys185 participates in a covalent cross-link: Glycyl lysine isopeptide (Lys-Gly) (interchain with G-Cter in SUMO1). Position 197 is an N6-acetyllysine (Lys197).

It belongs to the peroxiredoxin family. AhpC/Prx1 subfamily. Homodimer; disulfide-linked, upon oxidation. 5 homodimers assemble to form a ring-like decamer. Interacts with GDPD5; forms a mixed-disulfide with GDPD5. Interacts with SESN1 and SESN2. Interacts with FAM107A. Phosphorylated on Thr-90 during the M-phase, which leads to a decrease in enzymatic activity. Post-translationally, acetylation increases reducing activity and resistance to superoxidation. Deacetylated by HDAC6 which decreases reducing activity. Detected in heart and skeletal muscle (at protein level).

It localises to the cytoplasm. It carries out the reaction a hydroperoxide + [thioredoxin]-dithiol = an alcohol + [thioredoxin]-disulfide + H2O. Thiol-specific peroxidase that catalyzes the reduction of hydrogen peroxide and organic hydroperoxides to water and alcohols, respectively. Plays a role in cell protection against oxidative stress by detoxifying peroxides and as sensor of hydrogen peroxide-mediated signaling events. Might participate in the signaling cascades of growth factors and tumor necrosis factor-alpha by regulating the intracellular concentrations of H(2)O(2). Reduces an intramolecular disulfide bond in GDPD5 that gates the ability to GDPD5 to drive postmitotic motor neuron differentiation. This Myotis lucifugus (Little brown bat) protein is Peroxiredoxin-1 (PRDX1).